Reading from the N-terminus, the 233-residue chain is Biosynthetic peptidoglycan transglycosylase (233 aa).

The helical transmembrane segment at 7 to 27 (VFTWLAKLVLGLFFASILSVV) threads the bilayer.

It belongs to the glycosyltransferase 51 family.

It is found in the cell inner membrane. The catalysed reaction is [GlcNAc-(1-&gt;4)-Mur2Ac(oyl-L-Ala-gamma-D-Glu-L-Lys-D-Ala-D-Ala)](n)-di-trans,octa-cis-undecaprenyl diphosphate + beta-D-GlcNAc-(1-&gt;4)-Mur2Ac(oyl-L-Ala-gamma-D-Glu-L-Lys-D-Ala-D-Ala)-di-trans,octa-cis-undecaprenyl diphosphate = [GlcNAc-(1-&gt;4)-Mur2Ac(oyl-L-Ala-gamma-D-Glu-L-Lys-D-Ala-D-Ala)](n+1)-di-trans,octa-cis-undecaprenyl diphosphate + di-trans,octa-cis-undecaprenyl diphosphate + H(+). Its pathway is cell wall biogenesis; peptidoglycan biosynthesis. Functionally, peptidoglycan polymerase that catalyzes glycan chain elongation from lipid-linked precursors. This Shewanella oneidensis (strain ATCC 700550 / JCM 31522 / CIP 106686 / LMG 19005 / NCIMB 14063 / MR-1) protein is Biosynthetic peptidoglycan transglycosylase.